We begin with the raw amino-acid sequence, 468 residues long: Siroheme synthase 3 (468 aa).

A precorrin-2 dehydrogenase /sirohydrochlorin ferrochelatase region spans residues 1 to 204 (MDYLPIFCRL…GDSASANQLA (204 aa)). NAD(+) contacts are provided by residues 22 to 23 (EV) and 43 to 44 (PE). Residue S128 is modified to Phosphoserine. Positions 216-468 (GEVVLVGAGP…GAADAALASA (253 aa)) are uroporphyrinogen-III C-methyltransferase. P225 contributes to the S-adenosyl-L-methionine binding site. The active-site Proton acceptor is the D248. K270 (proton donor) is an active-site residue. S-adenosyl-L-methionine-binding positions include 301 to 303 (GGD), I306, 331 to 332 (TA), M383, and G412.

This sequence in the N-terminal section; belongs to the precorrin-2 dehydrogenase / sirohydrochlorin ferrochelatase family. In the C-terminal section; belongs to the precorrin methyltransferase family.

It carries out the reaction uroporphyrinogen III + 2 S-adenosyl-L-methionine = precorrin-2 + 2 S-adenosyl-L-homocysteine + H(+). It catalyses the reaction precorrin-2 + NAD(+) = sirohydrochlorin + NADH + 2 H(+). The enzyme catalyses siroheme + 2 H(+) = sirohydrochlorin + Fe(2+). It participates in cofactor biosynthesis; adenosylcobalamin biosynthesis; precorrin-2 from uroporphyrinogen III: step 1/1. The protein operates within cofactor biosynthesis; adenosylcobalamin biosynthesis; sirohydrochlorin from precorrin-2: step 1/1. It functions in the pathway porphyrin-containing compound metabolism; siroheme biosynthesis; precorrin-2 from uroporphyrinogen III: step 1/1. Its pathway is porphyrin-containing compound metabolism; siroheme biosynthesis; siroheme from sirohydrochlorin: step 1/1. It participates in porphyrin-containing compound metabolism; siroheme biosynthesis; sirohydrochlorin from precorrin-2: step 1/1. Functionally, multifunctional enzyme that catalyzes the SAM-dependent methylations of uroporphyrinogen III at position C-2 and C-7 to form precorrin-2 via precorrin-1. Then it catalyzes the NAD-dependent ring dehydrogenation of precorrin-2 to yield sirohydrochlorin. Finally, it catalyzes the ferrochelation of sirohydrochlorin to yield siroheme. In Aeromonas hydrophila subsp. hydrophila (strain ATCC 7966 / DSM 30187 / BCRC 13018 / CCUG 14551 / JCM 1027 / KCTC 2358 / NCIMB 9240 / NCTC 8049), this protein is Siroheme synthase 3.